The primary structure comprises 292 residues: MSKVKVSIEGSQETLWKIFHAEVNEMIVTKNGRKLFPKLEYIVEGLDENKLYAIMLQLQPVGESRFKFSGGKWQETGKAEKQVDAKKMWHADGVRKGSDWMWSSICFDRVKISNYSESNNASMIYLNSMHKYIPVLTIYESPSESPFCVPQSSNQIVATAKFPHTEFIAVTAYQNQKITDLKIKHNSFAKGFRDGNLSRKRRSPSYSDGSNSQSPSPKSRSPPEVAPLQSMPPINPFLFYFPHMLSENLPVQFPFAFPFLSPLPSTPSSSSSELSIVKEEDQEVEEDIDIVG.

Residues 10–194 constitute a DNA-binding region (T-box); it reads GSQETLWKIF…HNSFAKGFRD (185 aa). Disordered stretches follow at residues 192–227 and 265–292; these read FRDGNLSRKRRSPSYSDGSNSQSPSPKSRSPPEVAP and STPSSSSSELSIVKEEDQEVEEDIDIVG. 2 stretches are compositionally biased toward low complexity: residues 204–223 and 265–275; these read PSYSDGSNSQSPSPKSRSPP and STPSSSSSELS. Acidic residues predominate over residues 280-292; it reads EDQEVEEDIDIVG.

It localises to the nucleus. In terms of biological role, transcription factor. Involved in the control of early morphogenesis of the intestine, hypodermis and body-wall muscle. Involved in regulating expression of vab-7. Appears to have partially redundant function to tbx-8. Positively modulates expression of homeobox protein lin-39, perhaps by binding to regulatory regions of the lin-39 gene, acting in the vulval lineage. In Caenorhabditis elegans, this protein is T-box transcription factor tbx-9 (tbx-9).